The primary structure comprises 359 residues: Heat-inducible transcription repressor HrcA (359 aa).

The protein belongs to the HrcA family.

Its function is as follows. Negative regulator of class I heat shock genes (grpE-dnaK-dnaJ and groELS operons). Prevents heat-shock induction of these operons. This chain is Heat-inducible transcription repressor HrcA, found in Roseiflexus castenholzii (strain DSM 13941 / HLO8).